We begin with the raw amino-acid sequence, 1055 residues long: Auxin response factor 16 (1055 aa).

The TF-B3 DNA-binding region spans 127-229; it reads FCKTLTASDT…QLLLGIRRAT (103 aa). 5 disordered regions span residues 485-510, 532-565, 585-609, 701-720, and 732-769; these read PVMS…QQSS, QEHL…EQTS, SQLQ…PIAG, SDSI…LNHM, and SHSA…SRNL. 2 stretches are compositionally biased toward low complexity: residues 488–510 and 532–552; these read SQHQ…QQSS and QEHL…ASSL. Positions 742 to 756 are enriched in low complexity; sequence PSSSTAPSTSRISPI. The segment covering 757 to 769 has biased composition (polar residues); sequence NSLSRANQGSRNL. The PB1 domain maps to 940-1024; the sequence is RTFTKVQKRG…KSIKILSAAE (85 aa). The segment at 1034-1055 is disordered; the sequence is LGGVPPQTQACSASDDANAWRG.

Belongs to the ARF family. Homodimers and heterodimers. As to expression, expressed in roots, culms, leaves and young panicles.

The protein localises to the nucleus. Auxin response factors (ARFs) are transcriptional factors that bind specifically to the DNA sequence 5'-TGTCTC-3' found in the auxin-responsive promoter elements (AuxREs). This chain is Auxin response factor 16 (ARF16), found in Oryza sativa subsp. japonica (Rice).